The primary structure comprises 188 residues: Elongation factor P (188 aa).

It belongs to the elongation factor P family.

Its subcellular location is the cytoplasm. The protein operates within protein biosynthesis; polypeptide chain elongation. Its function is as follows. Involved in peptide bond synthesis. Stimulates efficient translation and peptide-bond synthesis on native or reconstituted 70S ribosomes in vitro. Probably functions indirectly by altering the affinity of the ribosome for aminoacyl-tRNA, thus increasing their reactivity as acceptors for peptidyl transferase. The chain is Elongation factor P from Malacoplasma penetrans (strain HF-2) (Mycoplasma penetrans).